The chain runs to 382 residues: D-alanine--D-alanine ligase (382 aa).

One can recognise an ATP-grasp domain in the interval K161 to H372. Residue V193–E248 participates in ATP binding. Residues D326, E339, and N341 each contribute to the Mg(2+) site.

The protein belongs to the D-alanine--D-alanine ligase family. Requires Mg(2+) as cofactor. The cofactor is Mn(2+).

The protein localises to the cytoplasm. The catalysed reaction is 2 D-alanine + ATP = D-alanyl-D-alanine + ADP + phosphate + H(+). Its pathway is cell wall biogenesis; peptidoglycan biosynthesis. In terms of biological role, cell wall formation. The sequence is that of D-alanine--D-alanine ligase from Pseudarthrobacter chlorophenolicus (strain ATCC 700700 / DSM 12829 / CIP 107037 / JCM 12360 / KCTC 9906 / NCIMB 13794 / A6) (Arthrobacter chlorophenolicus).